Here is a 174-residue protein sequence, read N- to C-terminus: Gamma-crystallin F (174 aa).

2 Beta/gamma crystallin 'Greek key' domains span residues glycine 2 to serine 40 and glycine 41 to proline 83. A connecting peptide region spans residues histidine 84–serine 87. Beta/gamma crystallin 'Greek key' domains follow at residues histidine 88 to glutamate 128 and glycine 129 to methionine 171.

It belongs to the beta/gamma-crystallin family.

In terms of biological role, crystallins are the dominant structural components of the vertebrate eye lens. The sequence is that of Gamma-crystallin F (Crygf) from Rattus norvegicus (Rat).